The sequence spans 418 residues: Glutamyl-tRNA reductase (418 aa).

Residues 49-52 (TCNR), Ser109, 114-116 (EPQ), and Gln120 each bind substrate. Catalysis depends on Cys50, which acts as the Nucleophile. Position 189-194 (189-194 (GAGETI)) interacts with NADP(+).

Belongs to the glutamyl-tRNA reductase family. Homodimer.

The catalysed reaction is (S)-4-amino-5-oxopentanoate + tRNA(Glu) + NADP(+) = L-glutamyl-tRNA(Glu) + NADPH + H(+). Its pathway is porphyrin-containing compound metabolism; protoporphyrin-IX biosynthesis; 5-aminolevulinate from L-glutamyl-tRNA(Glu): step 1/2. Functionally, catalyzes the NADPH-dependent reduction of glutamyl-tRNA(Glu) to glutamate 1-semialdehyde (GSA). The protein is Glutamyl-tRNA reductase of Escherichia coli O157:H7.